The chain runs to 223 residues: Riboflavin kinase (223 aa).

The unknown stretch occupies residues 1-89; sequence MHRINALKHL…KHIFCGDEDK (89 aa). Residues 90–223 form a riboflavin kinase region; sequence VELYGNVITG…IMIEDRSACE (134 aa). 99–104 lines the CDP pocket; it reads GLGEGQ. Positions 128 and 130 each coordinate Mg(2+). Positions 185 and 193 each coordinate FMN. Position 198–201 (198–201) interacts with CDP; it reads VHLR.

This sequence belongs to the archaeal riboflavin kinase family. Requires Mg(2+) as cofactor.

It catalyses the reaction riboflavin + CTP = CDP + FMN + H(+). The protein operates within cofactor biosynthesis; FMN biosynthesis; FMN from riboflavin (CTP route): step 1/1. Its function is as follows. Catalyzes the CTP-dependent phosphorylation of riboflavin (vitamin B2) to form flavin mononucleotide (FMN). In Methanococcoides burtonii (strain DSM 6242 / NBRC 107633 / OCM 468 / ACE-M), this protein is Riboflavin kinase (ribK).